The following is a 267-amino-acid chain: Inositol-1-monophosphatase (267 aa).

Residues Glu-66, Asp-84, Leu-86, and Asp-87 each contribute to the Mg(2+) site. Glu-66 is a substrate binding site. Substrate contacts are provided by residues 86–89 (LDGS), Arg-182, and Asp-213. A Mg(2+)-binding site is contributed by Asp-213.

It belongs to the inositol monophosphatase superfamily. Mg(2+) serves as cofactor.

It carries out the reaction a myo-inositol phosphate + H2O = myo-inositol + phosphate. The polypeptide is Inositol-1-monophosphatase (suhB) (Aeropyrum pernix (strain ATCC 700893 / DSM 11879 / JCM 9820 / NBRC 100138 / K1)).